The primary structure comprises 1230 residues: ATP-dependent helicase/nuclease subunit A (1230 aa).

Residues 3–473 enclose the UvrD-like helicase ATP-binding domain; that stretch reads TKFTKNQQRA…IDLADNFRSQ (471 aa). 24-31 is an ATP binding site; it reads ASAGSGKT. The region spanning 500-782 is the UvrD-like helicase C-terminal domain; sequence EAKLVPKAAY…RIMTIHASKG (283 aa).

It belongs to the helicase family. AddA subfamily. Heterodimer of AddA and AddB/RexB. The cofactor is Mg(2+).

The catalysed reaction is Couples ATP hydrolysis with the unwinding of duplex DNA by translocating in the 3'-5' direction.. The enzyme catalyses ATP + H2O = ADP + phosphate + H(+). The heterodimer acts as both an ATP-dependent DNA helicase and an ATP-dependent, dual-direction single-stranded exonuclease. Recognizes the chi site generating a DNA molecule suitable for the initiation of homologous recombination. The AddA nuclease domain is required for chi fragment generation; this subunit has the helicase and 3' -&gt; 5' nuclease activities. The sequence is that of ATP-dependent helicase/nuclease subunit A from Leuconostoc mesenteroides subsp. mesenteroides (strain ATCC 8293 / DSM 20343 / BCRC 11652 / CCM 1803 / JCM 6124 / NCDO 523 / NBRC 100496 / NCIMB 8023 / NCTC 12954 / NRRL B-1118 / 37Y).